A 121-amino-acid polypeptide reads, in one-letter code: Small ribosomal subunit protein uS13 (121 aa).

The interval Arg-93–Lys-121 is disordered. Residues Ala-106–Lys-121 show a composition bias toward basic residues.

The protein belongs to the universal ribosomal protein uS13 family. In terms of assembly, part of the 30S ribosomal subunit. Forms a loose heterodimer with protein S19. Forms two bridges to the 50S subunit in the 70S ribosome.

In terms of biological role, located at the top of the head of the 30S subunit, it contacts several helices of the 16S rRNA. In the 70S ribosome it contacts the 23S rRNA (bridge B1a) and protein L5 of the 50S subunit (bridge B1b), connecting the 2 subunits; these bridges are implicated in subunit movement. Contacts the tRNAs in the A and P-sites. This chain is Small ribosomal subunit protein uS13, found in Bacillus subtilis (strain 168).